Reading from the N-terminus, the 454-residue chain is Phosphoglucosamine mutase (454 aa).

Ser101 (phosphoserine intermediate) is an active-site residue. Mg(2+) contacts are provided by Ser101, Asp243, Asp245, and Asp247. The residue at position 101 (Ser101) is a Phosphoserine.

This sequence belongs to the phosphohexose mutase family. It depends on Mg(2+) as a cofactor. In terms of processing, activated by phosphorylation.

It catalyses the reaction alpha-D-glucosamine 1-phosphate = D-glucosamine 6-phosphate. Functionally, catalyzes the conversion of glucosamine-6-phosphate to glucosamine-1-phosphate. This Geobacter sp. (strain M21) protein is Phosphoglucosamine mutase.